We begin with the raw amino-acid sequence, 457 residues long: Acetylcholine receptor subunit alpha (457 aa).

Residues 1–20 form the signal peptide; sequence MEPWPLLLLFSLCSAGLVLG. Residues 21 to 232 lie on the Extracellular side of the membrane; sequence SEHETRLVAK…YHFVMQRLPL (212 aa). 2 cysteine pairs are disulfide-bonded: cysteine 148–cysteine 162 and cysteine 212–cysteine 213. Residue asparagine 161 is glycosylated (N-linked (GlcNAc...) asparagine). The chain crosses the membrane as a helical span at residues 233–253; that stretch reads YFIVNVIIPCLLFSFLTGLVF. Residues 254–264 are Cytoplasmic-facing; the sequence is YLPTDSGEKMT. Residues 265 to 285 form a helical membrane-spanning segment; sequence LSISVLLSLTVFLLVIVELIP. Over 286–296 the chain is Extracellular; the sequence is STSSAVPLIGK. The chain crosses the membrane as a helical span at residues 297–317; it reads YMLFTMVFVIASIIITVIVIN. Over 318–427 the chain is Cytoplasmic; sequence THHRSPSTHV…EWKYVAMVMD (110 aa). The helical transmembrane segment at 428 to 448 threads the bilayer; sequence HILLGVFMLVCIIGTLAVFAG. Residues 449–457 are Extracellular-facing; it reads RLIELNQQG.

It belongs to the ligand-gated ion channel (TC 1.A.9) family. Acetylcholine receptor (TC 1.A.9.1) subfamily. Alpha-1/CHRNA1 sub-subfamily. One of the alpha chains that assemble within the acetylcholine receptor, a pentamer of two alpha chains, a beta, a delta, and a gamma (in immature muscle) or epsilon (in mature muscle) chains. The muscle heteropentamer composed of alpha-1, beta-1, delta, epsilon subunits interacts with the alpha-conotoxin ImII. As to quaternary structure, is able to interact with other subunits of the acetylcholine receptor but is not assembled into functional acetylcholine-gated cation-selective channels. Isoform 1 is only expressed in skeletal muscle. Isoform 2 is constitutively expressed in skeletal muscle, brain, heart, kidney, liver, lung and thymus.

The protein resides in the postsynaptic cell membrane. It localises to the cell membrane. It carries out the reaction K(+)(in) = K(+)(out). The enzyme catalyses Na(+)(in) = Na(+)(out). Upon acetylcholine binding, the AChR responds by an extensive change in conformation that affects all subunits and leads to opening of an ion-conducting channel across the plasma membrane. In terms of biological role, non functional acetylcholine receptor alpha subunit which is not integrated into functional acetylcholine-gated cation-selective channels. This Homo sapiens (Human) protein is Acetylcholine receptor subunit alpha.